The following is a 1719-amino-acid chain: 5'-3' exoribonuclease 1 (1719 aa).

The segment covering 1268–1298 (HKSGFTDHSVRHQQRKHDSQRKFKEEYKSPK) has biased composition (basic and acidic residues). Positions 1268 to 1317 (HKSGFTDHSVRHQQRKHDSQRKFKEEYKSPKAECQSQKLSSKQTSGGSAR) are disordered. The span at 1301-1314 (CQSQKLSSKQTSGG) shows a compositional bias: polar residues. Position 1382 is a phosphoserine (S1382). Basic and acidic residues predominate over residues 1397–1430 (ILKIDSPDTRDSKNDMKKSDNEATVSSRRDERGV). Disordered regions lie at residues 1397 to 1445 (ILKI…KPHG) and 1634 to 1719 (ENKE…KPSE). The span at 1638-1660 (AQSSQATPLQTNKPGSSEATKMT) shows a compositional bias: polar residues. Residues 1661-1680 (PQESPPASSSSSQAAQPVSS) show a composition bias toward low complexity. The segment covering 1681-1690 (HVETASQGHV) has biased composition (polar residues).

Belongs to the 5'-3' exonuclease family. As to quaternary structure, found in a mRNP complex with UPF1, UPF2, UPF3B and XRN1. Associates with alpha and beta tubulins. Interacts with DIS3L2. Interacts with ZC3HAV1 in an RNA-dependent manner. Interacts with ZFP36L1. Interacts with TRIM71 (via NHL repeats) in an RNA-dependent manner. Interacts with YTHDC2 (via ANK repeats). Interacts with DHX34; the interaction is RNA-independent. In terms of tissue distribution, expressed in heart, brain (spinal cord, dorsal root and superior cervical ganglia, neurons of the cerebrum and brain stem), peripheral nerve fibers in the skin and intestine, spleen, lung, liver, skeletal muscle, kidney and testis.

The protein localises to the cytoplasm. Major 5'-3' exoribonuclease involved in mRNA decay. Required for the 5'-3'-processing of the G4 tetraplex-containing DNA and RNA substrates. The kinetic of hydrolysis is faster for G4 RNA tetraplex than for G4 DNA tetraplex and monomeric RNA tetraplex. Binds to RNA and DNA. Plays a role in replication-dependent histone mRNA degradation. In Mus musculus (Mouse), this protein is 5'-3' exoribonuclease 1.